Here is a 286-residue protein sequence, read N- to C-terminus: P2R1A-PPP2R2A-interacting phosphatase regulator 1 (286 aa).

Residues 1–46 (MAQEKMELDLELPAGTGASPAEGGGPGSGGLRRSNSAPLIHGLSDS) form a disordered region. At serine 34 the chain carries Phosphoserine. Position 36 is a phosphoserine; by CHEK1 (serine 36). Phosphoserine is present on residues serine 44, serine 47, serine 61, and serine 75. Lysine 88 participates in a covalent cross-link: Glycyl lysine isopeptide (Lys-Gly) (interchain with G-Cter in SUMO1). Phosphoserine is present on residues serine 142 and serine 146. Threonine 148 bears the Phosphothreonine mark. Residues 166–187 (SNGLPPSPIPSPTTRFTTRRSQ) are disordered. Low complexity predominate over residues 177 to 187 (PTTRFTTRRSQ). Residues serine 186 and serine 188 each carry the phosphoserine modification. The interval 238–286 (VSSDTLDGNSSSAGSSCNSPAKVSTTTDSPVSPAQAASPFIPVDELSSK) is disordered. A compositionally biased stretch (low complexity) spans 245-256 (GNSSSAGSSCNS). Positions 258 to 269 (AKVSTTTDSPVS) are enriched in polar residues. Phosphoserine occurs at positions 266, 269, and 275.

Belongs to the FAM122 family. As to quaternary structure, interacts with PPP2CA and PPP2R1A. Interacts (via its N-terminus) with PPP2R2A; the interaction is direct and this interaction inhibits PP2A activity. The CHEK1-mediated Ser-36 phosphorylated form interacts with 14-3-3 proteins. Post-translationally, CHEK1-mediated phosphorylation at Ser-36 negatively regulates its ability to inhibit serine/threonine-protein phosphatase 2A (PP2A) activity. Phosphorylation leads to its release from the PP2A complex and its sequestration by 14-3-3 proteins in the cytoplasm resulting in its inability to translocate to the nucleus, where it otherwise inhibits PP2A.

It localises to the nucleus. It is found in the cytoplasm. In terms of biological role, acts as an inhibitor of serine/threonine-protein phosphatase 2A (PP2A) activity. Inhibits PP2A activity by blocking the substrate binding site on PPP2R2A and the active site of PPP2CA. Potentiates ubiquitin-mediated proteasomal degradation of serine/threonine-protein phosphatase 2A catalytic subunit alpha (PPP2CA). Inhibits PP2A-mediated dephosphorylation of WEE1, promoting ubiquitin-mediated proteolysis of WEE1, thereby releasing G2/M checkpoint. The chain is P2R1A-PPP2R2A-interacting phosphatase regulator 1 from Rattus norvegicus (Rat).